A 299-amino-acid chain; its full sequence is MNEFDRVRDYLTDLQDRICAAVEAIDGKARFAEDLWQRAEGGGGRTRILRDGAVFEQAGIGFSDVSGARLPPSASAHRPELAGATWRACGVSLVFHPHNPHIPTTHANVRYFRAERDGEMVAAWFGGGFDLTPFYPVDEDVMHWHRTAQALCAPFGEERYAAHKRWCDEYFFLRHRNETRGVGGLFFDDLGQDFERDFAYQRAVGDGFLDAYLPIVERRKDTPYGEAERAFQLYRRGRYVEFNLVYDRGTLFGLQSGGRAESILMSLPPQVRWEYGFQPQPGSAEARLADYLIPRDWLG.

Residue serine 92 participates in substrate binding. A divalent metal cation-binding residues include histidine 96 and histidine 106. The active-site Proton donor is the histidine 106. Substrate is bound at residue 108–110 (NVR). Positions 145 and 175 each coordinate a divalent metal cation. The tract at residues 239–274 (YVEFNLVYDRGTLFGLQSGGRAESILMSLPPQVRWE) is important for dimerization. Residue 257–259 (GGR) coordinates substrate.

It belongs to the aerobic coproporphyrinogen-III oxidase family. Homodimer. A divalent metal cation is required as a cofactor.

Its subcellular location is the cytoplasm. It carries out the reaction coproporphyrinogen III + O2 + 2 H(+) = protoporphyrinogen IX + 2 CO2 + 2 H2O. Its pathway is porphyrin-containing compound metabolism; protoporphyrin-IX biosynthesis; protoporphyrinogen-IX from coproporphyrinogen-III (O2 route): step 1/1. Involved in the heme biosynthesis. Catalyzes the aerobic oxidative decarboxylation of propionate groups of rings A and B of coproporphyrinogen-III to yield the vinyl groups in protoporphyrinogen-IX. The polypeptide is Oxygen-dependent coproporphyrinogen-III oxidase (Xanthomonas campestris pv. campestris (strain 8004)).